The following is a 198-amino-acid chain: UPF0301 protein Tfu_2389 (198 aa).

Belongs to the UPF0301 (AlgH) family.

The chain is UPF0301 protein Tfu_2389 from Thermobifida fusca (strain YX).